A 141-amino-acid chain; its full sequence is Galactose-6-phosphate isomerase subunit LacA (141 aa).

The protein belongs to the LacAB/RpiB family. Heteromultimeric protein consisting of LacA and LacB.

The catalysed reaction is aldehydo-D-galactose 6-phosphate = keto-D-tagatose 6-phosphate. Its pathway is carbohydrate metabolism; D-galactose 6-phosphate degradation; D-tagatose 6-phosphate from D-galactose 6-phosphate: step 1/1. This Streptococcus equi subsp. equi (strain 4047) protein is Galactose-6-phosphate isomerase subunit LacA.